A 222-amino-acid chain; its full sequence is GTP cyclohydrolase 1 (222 aa).

Zn(2+) contacts are provided by C111, H114, and C182.

Belongs to the GTP cyclohydrolase I family. In terms of assembly, homomer.

The enzyme catalyses GTP + H2O = 7,8-dihydroneopterin 3'-triphosphate + formate + H(+). Its pathway is cofactor biosynthesis; 7,8-dihydroneopterin triphosphate biosynthesis; 7,8-dihydroneopterin triphosphate from GTP: step 1/1. This chain is GTP cyclohydrolase 1, found in Shigella boydii serotype 18 (strain CDC 3083-94 / BS512).